The sequence spans 79 residues: UPF0180 protein Bcer98_1118 (79 aa).

This sequence belongs to the UPF0180 family.

The polypeptide is UPF0180 protein Bcer98_1118 (Bacillus cytotoxicus (strain DSM 22905 / CIP 110041 / 391-98 / NVH 391-98)).